A 187-amino-acid chain; its full sequence is MSRFYFFFNLICLYLAIKSALSAELDTNDQKYADLRTTGRGESPDSTGPDSDTLRRDDGAEGLNKRAAAMWFGPRLGKRTIAADLHDDLVEEFDAEPLGYAGEPPQKLATELVQGAPYMVLLVTAKPRKPQPIFYHTTSPRLGRRDSVGENHQRPPFAPRLGRNLPFSPRLGRSYNGGYPLPFQFAY.

The first 22 residues, 1 to 22, serve as a signal peptide directing secretion; the sequence is MSRFYFFFNLICLYLAIKSALS. Residues 23–64 constitute a propeptide that is removed on maturation; it reads AELDTNDQKYADLRTTGRGESPDSTGPDSDTLRRDDGAEGLN. Positions 34–43 are enriched in basic and acidic residues; the sequence is DLRTTGRGES. Residues 34–58 are disordered; the sequence is DLRTTGRGESPDSTGPDSDTLRRDD. L76 carries the leucine amide modification. A propeptide spanning residues 80-127 is cleaved from the precursor; sequence TIAADLHDDLVEEFDAEPLGYAGEPPQKLATELVQGAPYMVLLVTAKP. The tract at residues 132 to 163 is disordered; sequence PIFYHTTSPRLGRRDSVGENHQRPPFAPRLGR. L142 is modified (leucine amide). The span at 143–153 shows a compositional bias: basic and acidic residues; that stretch reads GRRDSVGENHQ. A leucine amide mark is found at L161 and L171. Positions 174–187 are excised as a propeptide; that stretch reads SYNGGYPLPFQFAY.

Belongs to the pyrokinin family.

Its subcellular location is the secreted. In terms of biological role, a hormone that controls sex pheromone production in females and pheromone responsiveness in male. Also mediates visceral muscle contractile activity (myotropic activity). The polypeptide is PBAN-type neuropeptides (Anopheles gambiae (African malaria mosquito)).